Here is a 447-residue protein sequence, read N- to C-terminus: Peptide-N(4)-(N-acetyl-beta-glucosaminyl)asparagine amidase (447 aa).

Positions 209, 212, 241, and 244 each coordinate Zn(2+). The active-site Nucleophile is the Cys-267. Active-site residues include His-294 and Asp-311.

This sequence belongs to the transglutaminase-like superfamily. PNGase family. Requires Zn(2+) as cofactor.

The protein resides in the cytoplasm. The enzyme catalyses Hydrolysis of an N(4)-(acetyl-beta-D-glucosaminyl)asparagine residue in which the glucosamine residue may be further glycosylated, to yield a (substituted) N-acetyl-beta-D-glucosaminylamine and a peptide containing an aspartate residue.. Functionally, specifically deglycosylates the denatured form of N-linked glycoproteins in the cytoplasm and assists their proteasome-mediated degradation. Cleaves the beta-aspartyl-glucosamine (GlcNAc) of the glycan and the amide side chain of Asn, converting Asn to Asp. Prefers proteins containing high-mannose over those bearing complex type oligosaccharides. Can recognize misfolded proteins in the endoplasmic reticulum that are exported to the cytosol to be destroyed and deglycosylate them, while it has no activity toward native proteins. Deglycosylation is a prerequisite for subsequent proteasome-mediated degradation of some, but not all, misfolded glycoproteins. In Oryza sativa subsp. japonica (Rice), this protein is Peptide-N(4)-(N-acetyl-beta-glucosaminyl)asparagine amidase (PNG1).